The following is a 164-amino-acid chain: ATP synthase subunit b (164 aa).

Residues 6–26 (GELVGNFILVTGSVIVLLLLI) form a helical membrane-spanning segment.

Belongs to the ATPase B chain family. F-type ATPases have 2 components, F(1) - the catalytic core - and F(0) - the membrane proton channel. F(1) has five subunits: alpha(3), beta(3), gamma(1), delta(1), epsilon(1). F(0) has three main subunits: a(1), b(2) and c(10-14). The alpha and beta chains form an alternating ring which encloses part of the gamma chain. F(1) is attached to F(0) by a central stalk formed by the gamma and epsilon chains, while a peripheral stalk is formed by the delta and b chains.

The protein localises to the cell membrane. F(1)F(0) ATP synthase produces ATP from ADP in the presence of a proton or sodium gradient. F-type ATPases consist of two structural domains, F(1) containing the extramembraneous catalytic core and F(0) containing the membrane proton channel, linked together by a central stalk and a peripheral stalk. During catalysis, ATP synthesis in the catalytic domain of F(1) is coupled via a rotary mechanism of the central stalk subunits to proton translocation. Functionally, component of the F(0) channel, it forms part of the peripheral stalk, linking F(1) to F(0). This is ATP synthase subunit b from Streptococcus pyogenes serotype M3 (strain ATCC BAA-595 / MGAS315).